The following is a 928-amino-acid chain: cGMP-dependent 3',5'-cyclic phosphodiesterase (928 aa).

S109 carries the phosphoserine modification. Residues 188–210 form a disordered region; the sequence is RRPEAVQNTSADPSEDQKDEKGY. GAF domains follow at residues 228 to 365 and 397 to 536; these read DATS…GTVL and DVSV…GISI. Residues S419, D434, I453, Y476, and T487 each coordinate 3',5'-cyclic GMP. The PDEase domain occupies 566–890; sequence SDDEYTKLLH…EHWTKVSHKF (325 aa). H644 acts as the Proton donor in catalysis. Zn(2+) contacts are provided by H648, H684, D685, and D796. D685 is a Mg(2+) binding site.

It belongs to the cyclic nucleotide phosphodiesterase family. PDE2 subfamily. In terms of assembly, homodimer. The cofactor is Zn(2+). Mg(2+) is required as a cofactor. Expressed in brain and liver.

It is found in the cell membrane. The protein localises to the cytoplasm. It localises to the mitochondrion matrix. The protein resides in the mitochondrion inner membrane. Its subcellular location is the mitochondrion outer membrane. The enzyme catalyses a nucleoside 3',5'-cyclic phosphate + H2O = a nucleoside 5'-phosphate + H(+). It catalyses the reaction 3',5'-cyclic GMP + H2O = GMP + H(+). It carries out the reaction 3',5'-cyclic AMP + H2O = AMP + H(+). With respect to regulation, the 3',5'-cyclic-AMP phosphodiesterase activity is stimulated by 3',5'-cyclic GMP. Specifically inhibited by Bay 60-7550. When repressed, protected from ionomycin- but not staurosporin-induced cell death. In terms of biological role, cGMP-activated cyclic nucleotide phosphodiesterase with a dual-specificity for the second messengers cAMP and cGMP, which are key regulators of many important physiological processes. Has a higher efficiency with cGMP compared to cAMP. Plays a role in cell growth and migration. Functionally, regulates mitochondrial cAMP levels and respiration. Involved in the regulation of mitochondria morphology/dynamics and apoptotic cell death via local modulation of cAMP/PKA signaling in the mitochondrion, including the monitoring of local cAMP levels at the outer mitochondrial membrane and of PKA-dependent phosphorylation of Dnm1l. The polypeptide is cGMP-dependent 3',5'-cyclic phosphodiesterase (Rattus norvegicus (Rat)).